The sequence spans 334 residues: Protein-methionine-sulfoxide reductase catalytic subunit MsrP (334 aa).

Positions 1 to 44 (MKKIRPLTEADVTAESAFFMQRRQVLKALGISAAALSLPSTAQA) form a signal peptide, tat-type signal. Mo-molybdopterin is bound by residues Asn-88, 91-92 (YE), Cys-146, Thr-181, Asn-233, Arg-238, and 249-251 (GIK).

This sequence belongs to the MsrP family. As to quaternary structure, heterodimer of a catalytic subunit (MsrP) and a heme-binding subunit (MsrQ). The cofactor is Mo-molybdopterin. Post-translationally, predicted to be exported by the Tat system. The position of the signal peptide cleavage has not been experimentally proven.

It localises to the periplasm. It catalyses the reaction L-methionyl-[protein] + a quinone + H2O = L-methionyl-(S)-S-oxide-[protein] + a quinol. It carries out the reaction L-methionyl-[protein] + a quinone + H2O = L-methionyl-(R)-S-oxide-[protein] + a quinol. Part of the MsrPQ system that repairs oxidized periplasmic proteins containing methionine sulfoxide residues (Met-O), using respiratory chain electrons. Thus protects these proteins from oxidative-stress damage caused by reactive species of oxygen and chlorine generated by the host defense mechanisms. MsrPQ is essential for the maintenance of envelope integrity under bleach stress, rescuing a wide series of structurally unrelated periplasmic proteins from methionine oxidation, including the primary periplasmic chaperone SurA and the lipoprotein Pal. The catalytic subunit MsrP is non-stereospecific, being able to reduce both (R-) and (S-) diastereoisomers of methionine sulfoxide. This is Protein-methionine-sulfoxide reductase catalytic subunit MsrP from Salmonella dublin (strain CT_02021853).